A 335-amino-acid polypeptide reads, in one-letter code: tRNA N6-adenosine threonylcarbamoyltransferase (335 aa).

3 residues coordinate a divalent metal cation: histidine 109, histidine 113, and tyrosine 130. Substrate contacts are provided by residues 130–134, aspartate 162, glycine 177, glutamate 181, and asparagine 266; that span reads YVSGG. Residue aspartate 294 participates in a divalent metal cation binding.

The protein belongs to the KAE1 / TsaD family. As to quaternary structure, component of the EKC/KEOPS complex composed of at least GON7, TP53RK, TPRKB, OSGEP and LAGE3; the whole complex dimerizes. Interacts with PRAME. A divalent metal cation is required as a cofactor. In terms of tissue distribution, widely expressed at low level. Expressed in heart, placenta, liver, kidney, lung, brain, skeletal muscle and pancreas.

It is found in the cytoplasm. Its subcellular location is the nucleus. The catalysed reaction is L-threonylcarbamoyladenylate + adenosine(37) in tRNA = N(6)-L-threonylcarbamoyladenosine(37) in tRNA + AMP + H(+). Its function is as follows. Component of the EKC/KEOPS complex that is required for the formation of a threonylcarbamoyl group on adenosine at position 37 (t(6)A37) in tRNAs that read codons beginning with adenine. The complex is probably involved in the transfer of the threonylcarbamoyl moiety of threonylcarbamoyl-AMP (TC-AMP) to the N6 group of A37. OSGEP likely plays a direct catalytic role in this reaction, but requires other protein(s) of the complex to fulfill this activity. The chain is tRNA N6-adenosine threonylcarbamoyltransferase from Homo sapiens (Human).